The chain runs to 400 residues: MSSISSAPQQQFSLRYHKASISYILPISSRYIYSADQSGLVIKWDLQIRRPKLQWQAHKDSILTILQWHQYIVTHSRDSTIKVWLEDILQFEMPVNALNYTNIVLYRDNYLITPATLDSNNVDVYKLKQHPIEVSRVIANISIFELVNKTRTNMHANKAGDGVDINVKYADEFAIDDKDNMQGRQDFGIIMKMLVIDMTIYIGFESGDIVGLHLEVPESKLTRGSNSTLLINREPRLKLEYQNTLLVPNPVISLANLNGLLVSGSTGTKVVIHSDPTRTVKFHLSGIHSIQTYQDRLVIGFWDGAIEYKGEIIQRPLPQIKGGLDINSNGDDENEEENLKSNVKLTSMTLSSFGNSSGSDTAKVQHVRKPKYSEMVKAKSMSDALFAGYEDGTIMGYALI.

4 WD repeats span residues 6 to 54 (SAPQ…PKLQ), 57 to 94 (AHKD…FEMP), 240 to 272 (EYQN…KVVI), and 273 to 312 (HSDP…KGEI).

The protein belongs to the WD repeat ASA1 family. In terms of assembly, component of the ASTRA chromatin remodeling machinery complex.

It is found in the nucleus. In terms of biological role, component of the ASTRA complex involved in chromatin remodeling. The protein is ASTRA-associated protein 1 (ASA1) of Lodderomyces elongisporus (strain ATCC 11503 / CBS 2605 / JCM 1781 / NBRC 1676 / NRRL YB-4239) (Yeast).